Consider the following 520-residue polypeptide: Amine oxidase [flavin-containing] B (520 aa).

An N-acetylserine modification is found at serine 2. Over serine 2 to valine 489 the chain is Cytoplasmic. 2 positions are modified to N6-acetyllysine: lysine 52 and lysine 248. Cysteine 397 carries the S-8alpha-FAD cysteine modification. The chain crosses the membrane as a helical; Anchor for type IV membrane protein span at residues proline 490 to leucine 516. Residues phenylalanine 517 to phenylalanine 520 are Mitochondrial intermembrane-facing.

Belongs to the flavin monoamine oxidase family. In terms of assembly, monomer, homo- or heterodimer (containing two subunits of similar size). Each subunit contains a covalently bound flavin. Enzymatically active as monomer. FAD is required as a cofactor.

Its subcellular location is the mitochondrion outer membrane. The enzyme catalyses a secondary aliphatic amine + O2 + H2O = a primary amine + an aldehyde + H2O2. The catalysed reaction is (R)-adrenaline + O2 + H2O = (R)-3,4-dihydroxymandelaldehyde + methylamine + H2O2. It catalyses the reaction a primary methyl amine + O2 + H2O = an aldehyde + H2O2 + NH4(+). It carries out the reaction benzylamine + O2 + H2O = benzaldehyde + H2O2 + NH4(+). The enzyme catalyses dopamine + O2 + H2O = 3,4-dihydroxyphenylacetaldehyde + H2O2 + NH4(+). The catalysed reaction is tyramine + O2 + H2O = (4-hydroxyphenyl)acetaldehyde + H2O2 + NH4(+). It catalyses the reaction (R)-noradrenaline + O2 + H2O = (R)-3,4-dihydroxymandelaldehyde + H2O2 + NH4(+). It carries out the reaction 2-phenylethylamine + O2 + H2O = 2-phenylacetaldehyde + H2O2 + NH4(+). The enzyme catalyses N-acetylputrescine + O2 + H2O = 4-acetamidobutanal + H2O2 + NH4(+). Functionally, catalyzes the oxidative deamination of primary and some secondary amines such as neurotransmitters, and exogenous amines including the tertiary amine, neurotoxin 1-methyl-4-phenyl-1,2,3,6-tetrahydropyridine (MPTP), with concomitant reduction of oxygen to hydrogen peroxide and participates in the metabolism of neuroactive and vasoactive amines in the central nervous system and peripheral tissues. Preferentially degrades benzylamine and phenylethylamine. The sequence is that of Amine oxidase [flavin-containing] B from Mus musculus (Mouse).